Consider the following 285-residue polypeptide: Probable cobalamin biosynthesis protein CobD (285 aa).

Transmembrane regions (helical) follow at residues 10–32 (LIDL…GKVI), 45–67 (YLDF…ILSH), 145–167 (VIAP…RAVN), and 266–283 (VYWI…IILY).

This sequence belongs to the CobD/CbiB family.

The protein localises to the cell membrane. Its pathway is cofactor biosynthesis; adenosylcobalamin biosynthesis. Converts cobyric acid to cobinamide by the addition of aminopropanol on the F carboxylic group. The sequence is that of Probable cobalamin biosynthesis protein CobD from Pyrococcus furiosus (strain ATCC 43587 / DSM 3638 / JCM 8422 / Vc1).